The sequence spans 179 residues: Signal peptidase complex catalytic subunit SEC11A (179 aa).

The Cytoplasmic segment spans residues 1–16 (MLSLDFLDDVRRMNKR). The chain crosses the membrane as a helical; Signal-anchor for type II membrane protein span at residues 17–36 (QLYYQVLNFGMIVSSALMIW). Residues 37 to 179 (KGLMVITGSE…LGLFVLVHRE (143 aa)) lie on the Lumenal side of the membrane. Catalysis depends on charge relay system residues Ser56, His96, and Asp122. Positions 165-176 (AVLFLLGLFVLV) are C-terminal short (CTS) helix.

This sequence belongs to the peptidase S26B family. As to quaternary structure, component of the signal peptidase complex paralog A (SPC-A) composed of a catalytic subunit SEC11A and three accessory subunits SPCS1, SPCS2 and SPCS3. Within the complex, interacts with SPCS2 and SPCS3. The complex induces a local thinning of the ER membrane which is used to measure the length of the signal peptide (SP) h-region of protein substrates. This ensures the selectivity of the complex towards h-regions shorter than 18-20 amino acids.

The protein localises to the endoplasmic reticulum membrane. The enzyme catalyses Cleavage of hydrophobic, N-terminal signal or leader sequences from secreted and periplasmic proteins.. Its function is as follows. Catalytic component of the signal peptidase complex (SPC) which catalyzes the cleavage of N-terminal signal sequences from nascent proteins as they are translocated into the lumen of the endoplasmic reticulum. Specifically cleaves N-terminal signal peptides that contain a hydrophobic alpha-helix (h-region) shorter than 18-20 amino acids. The sequence is that of Signal peptidase complex catalytic subunit SEC11A (SEC11A) from Bos taurus (Bovine).